The following is a 25-amino-acid chain: Oxyopinin-3c (25 aa).

As to expression, expressed by the venom gland.

It is found in the secreted. Its function is as follows. May have cytolytic and antimicrobial activity. The sequence is that of Oxyopinin-3c from Oxyopes takobius (Lynx spider).